We begin with the raw amino-acid sequence, 185 residues long: TATA-box-binding protein 3 (185 aa).

2 repeat units span residues 7 to 84 (IENV…ANKL) and 100 to 178 (VQNI…RKEF).

Belongs to the TBP family.

General factor that plays a role in the activation of archaeal genes transcribed by RNA polymerase. Binds specifically to the TATA box promoter element which lies close to the position of transcription initiation. This is TATA-box-binding protein 3 from Methanosarcina acetivorans (strain ATCC 35395 / DSM 2834 / JCM 12185 / C2A).